Reading from the N-terminus, the 383-residue chain is Acetylornithine deacetylase (383 aa).

His-80 contributes to the Zn(2+) binding site. Asp-82 is an active-site residue. Zn(2+) is bound at residue Asp-112. Glu-144 is a catalytic residue. Positions 145, 169, and 355 each coordinate Zn(2+).

It belongs to the peptidase M20A family. ArgE subfamily. As to quaternary structure, homodimer. The cofactor is Zn(2+). Co(2+) is required as a cofactor. Glutathione serves as cofactor.

Its subcellular location is the cytoplasm. It catalyses the reaction N(2)-acetyl-L-ornithine + H2O = L-ornithine + acetate. Its pathway is amino-acid biosynthesis; L-arginine biosynthesis; L-ornithine from N(2)-acetyl-L-ornithine (linear): step 1/1. Functionally, catalyzes the hydrolysis of the amide bond of N(2)-acetylated L-amino acids. Cleaves the acetyl group from N-acetyl-L-ornithine to form L-ornithine, an intermediate in L-arginine biosynthesis pathway, and a branchpoint in the synthesis of polyamines. The chain is Acetylornithine deacetylase from Shigella boydii serotype 18 (strain CDC 3083-94 / BS512).